The primary structure comprises 223 residues: Putative 3-methyladenine DNA glycosylase (223 aa).

It belongs to the DNA glycosylase MPG family.

This Rhodococcus jostii (strain RHA1) protein is Putative 3-methyladenine DNA glycosylase.